Here is a 299-residue protein sequence, read N- to C-terminus: Acetylglutamate kinase (299 aa).

Substrate-binding positions include 64 to 65 (GG), Arg-86, and Asn-197.

The protein belongs to the acetylglutamate kinase family. ArgB subfamily.

The protein resides in the cytoplasm. It carries out the reaction N-acetyl-L-glutamate + ATP = N-acetyl-L-glutamyl 5-phosphate + ADP. The protein operates within amino-acid biosynthesis; L-arginine biosynthesis; N(2)-acetyl-L-ornithine from L-glutamate: step 2/4. Catalyzes the ATP-dependent phosphorylation of N-acetyl-L-glutamate. The protein is Acetylglutamate kinase of Persephonella marina (strain DSM 14350 / EX-H1).